The chain runs to 289 residues: Serine/threonine-protein phosphatase Pgam5, mitochondrial (289 aa).

The helical transmembrane segment at 7-23 (LVCGAGAGLAAFYLSRL) threads the bilayer.

It belongs to the phosphoglycerate mutase family. BPG-dependent PGAM subfamily. In terms of assembly, interacts with Pk92B/ASK1.

Its subcellular location is the mitochondrion outer membrane. The enzyme catalyses O-phospho-L-seryl-[protein] + H2O = L-seryl-[protein] + phosphate. It carries out the reaction O-phospho-L-threonyl-[protein] + H2O = L-threonyl-[protein] + phosphate. Its function is as follows. Displays phosphatase activity for serine/threonine residues, and dephosphorylates and activates Pk92B kinase. Has apparently no phosphoglycerate mutase activity. This chain is Serine/threonine-protein phosphatase Pgam5, mitochondrial, found in Drosophila ananassae (Fruit fly).